Reading from the N-terminus, the 158-residue chain is Endoribonuclease YbeY (158 aa).

Residues H119, H123, and H129 each contribute to the Zn(2+) site.

This sequence belongs to the endoribonuclease YbeY family. It depends on Zn(2+) as a cofactor.

The protein resides in the cytoplasm. Its function is as follows. Single strand-specific metallo-endoribonuclease involved in late-stage 70S ribosome quality control and in maturation of the 3' terminus of the 16S rRNA. The sequence is that of Endoribonuclease YbeY from Acinetobacter baumannii (strain ACICU).